Reading from the N-terminus, the 200-residue chain is Ribonuclease HII (200 aa).

In terms of domain architecture, RNase H type-2 spans 14–200 (ERVAGLDEAG…HRQSFTLFRD (187 aa)). Residues Asp-20, Glu-21, and Asp-112 each coordinate a divalent metal cation.

It belongs to the RNase HII family. The cofactor is Mn(2+). Requires Mg(2+) as cofactor.

Its subcellular location is the cytoplasm. It carries out the reaction Endonucleolytic cleavage to 5'-phosphomonoester.. Its function is as follows. Endonuclease that specifically degrades the RNA of RNA-DNA hybrids. The protein is Ribonuclease HII of Salinibacter ruber (strain DSM 13855 / M31).